Here is a 253-residue protein sequence, read N- to C-terminus: Pimeloyl-[acyl-carrier protein] methyl ester esterase (253 aa).

Substrate is bound by residues Trp18, 78 to 79, and 139 to 143; these read SL and FLALD. The active-site Nucleophile is the Ser78. Active-site residues include Asp203 and His231. His231 is a binding site for substrate.

This sequence belongs to the AB hydrolase superfamily. Carboxylesterase BioH family. As to quaternary structure, monomer.

It localises to the cytoplasm. The enzyme catalyses 6-carboxyhexanoyl-[ACP] methyl ester + H2O = 6-carboxyhexanoyl-[ACP] + methanol + H(+). It participates in cofactor biosynthesis; biotin biosynthesis. Its function is as follows. The physiological role of BioH is to remove the methyl group introduced by BioC when the pimeloyl moiety is complete. It allows to synthesize pimeloyl-ACP via the fatty acid synthetic pathway through the hydrolysis of the ester bonds of pimeloyl-ACP esters. The chain is Pimeloyl-[acyl-carrier protein] methyl ester esterase from Xanthomonas campestris pv. campestris (strain 8004).